We begin with the raw amino-acid sequence, 513 residues long: Probable DNA primase large subunit (513 aa).

Residues Cys-315, Cys-398, Cys-415, and Cys-457 each contribute to the [4Fe-4S] cluster site.

Belongs to the eukaryotic-type primase large subunit family. Heterodimer of a small subunit and a large subunit. Requires [4Fe-4S] cluster as cofactor.

DNA primase is the polymerase that synthesizes small RNA primers for the Okazaki fragments made during discontinuous DNA replication. The sequence is that of Probable DNA primase large subunit from Neurospora crassa (strain ATCC 24698 / 74-OR23-1A / CBS 708.71 / DSM 1257 / FGSC 987).